The following is a 398-amino-acid chain: 1-deoxy-D-xylulose 5-phosphate reductoisomerase (398 aa).

NADPH is bound by residues T11, G12, S13, I14, R38, N39, and N125. K126 is a binding site for 1-deoxy-D-xylulose 5-phosphate. E127 is an NADPH binding site. D151 contributes to the Mn(2+) binding site. Residues S152, E153, S179, and H202 each contribute to the 1-deoxy-D-xylulose 5-phosphate site. E153 contributes to the Mn(2+) binding site. NADPH is bound at residue G208. 1-deoxy-D-xylulose 5-phosphate is bound by residues S215, N220, K221, and E224. E224 is a Mn(2+) binding site.

The protein belongs to the DXR family. Requires Mg(2+) as cofactor. Mn(2+) serves as cofactor.

It carries out the reaction 2-C-methyl-D-erythritol 4-phosphate + NADP(+) = 1-deoxy-D-xylulose 5-phosphate + NADPH + H(+). Its pathway is isoprenoid biosynthesis; isopentenyl diphosphate biosynthesis via DXP pathway; isopentenyl diphosphate from 1-deoxy-D-xylulose 5-phosphate: step 1/6. Catalyzes the NADPH-dependent rearrangement and reduction of 1-deoxy-D-xylulose-5-phosphate (DXP) to 2-C-methyl-D-erythritol 4-phosphate (MEP). The protein is 1-deoxy-D-xylulose 5-phosphate reductoisomerase of Burkholderia multivorans (strain ATCC 17616 / 249).